A 732-amino-acid chain; its full sequence is Phosphoribosylformylglycinamidine synthase subunit PurL (732 aa).

His-32 is a catalytic residue. Position 35 (Tyr-35) interacts with ATP. Residue Glu-81 coordinates Mg(2+). Residues 82 to 85 (SHNH) and Arg-104 each bind substrate. The active-site Proton acceptor is the His-83. Position 105 (Asp-105) interacts with Mg(2+). Position 230 (Gln-230) interacts with substrate. Asp-258 is a binding site for Mg(2+). 302 to 304 (ESQ) contributes to the substrate binding site. The ATP site is built by Asp-485 and Gly-522. Asn-523 serves as a coordination point for Mg(2+). Ser-525 lines the substrate pocket.

This sequence belongs to the FGAMS family. As to quaternary structure, monomer. Part of the FGAM synthase complex composed of 1 PurL, 1 PurQ and 2 PurS subunits.

It is found in the cytoplasm. It catalyses the reaction N(2)-formyl-N(1)-(5-phospho-beta-D-ribosyl)glycinamide + L-glutamine + ATP + H2O = 2-formamido-N(1)-(5-O-phospho-beta-D-ribosyl)acetamidine + L-glutamate + ADP + phosphate + H(+). It functions in the pathway purine metabolism; IMP biosynthesis via de novo pathway; 5-amino-1-(5-phospho-D-ribosyl)imidazole from N(2)-formyl-N(1)-(5-phospho-D-ribosyl)glycinamide: step 1/2. In terms of biological role, part of the phosphoribosylformylglycinamidine synthase complex involved in the purines biosynthetic pathway. Catalyzes the ATP-dependent conversion of formylglycinamide ribonucleotide (FGAR) and glutamine to yield formylglycinamidine ribonucleotide (FGAM) and glutamate. The FGAM synthase complex is composed of three subunits. PurQ produces an ammonia molecule by converting glutamine to glutamate. PurL transfers the ammonia molecule to FGAR to form FGAM in an ATP-dependent manner. PurS interacts with PurQ and PurL and is thought to assist in the transfer of the ammonia molecule from PurQ to PurL. This chain is Phosphoribosylformylglycinamidine synthase subunit PurL, found in Methanococcus aeolicus (strain ATCC BAA-1280 / DSM 17508 / OCM 812 / Nankai-3).